The following is a 505-amino-acid chain: ATP synthase subunit alpha, chloroplastic (505 aa).

170–177 (GDRQTGKT) serves as a coordination point for ATP.

It belongs to the ATPase alpha/beta chains family. As to quaternary structure, F-type ATPases have 2 components, CF(1) - the catalytic core - and CF(0) - the membrane proton channel. CF(1) has five subunits: alpha(3), beta(3), gamma(1), delta(1), epsilon(1). CF(0) has four main subunits: a, b, b' and c.

It is found in the plastid. It localises to the chloroplast thylakoid membrane. The enzyme catalyses ATP + H2O + 4 H(+)(in) = ADP + phosphate + 5 H(+)(out). Functionally, produces ATP from ADP in the presence of a proton gradient across the membrane. The alpha chain is a regulatory subunit. The sequence is that of ATP synthase subunit alpha, chloroplastic from Phaeodactylum tricornutum (strain CCAP 1055/1).